The sequence spans 349 residues: N-acetyl-gamma-glutamyl-phosphate reductase (349 aa).

C149 is an active-site residue.

Belongs to the NAGSA dehydrogenase family. Type 1 subfamily.

The protein resides in the cytoplasm. The enzyme catalyses N-acetyl-L-glutamate 5-semialdehyde + phosphate + NADP(+) = N-acetyl-L-glutamyl 5-phosphate + NADPH + H(+). It participates in amino-acid biosynthesis; L-arginine biosynthesis; N(2)-acetyl-L-ornithine from L-glutamate: step 3/4. In terms of biological role, catalyzes the NADPH-dependent reduction of N-acetyl-5-glutamyl phosphate to yield N-acetyl-L-glutamate 5-semialdehyde. In Acinetobacter baumannii (strain AB307-0294), this protein is N-acetyl-gamma-glutamyl-phosphate reductase.